Reading from the N-terminus, the 582-residue chain is NudC domain-containing protein 1 (582 aa).

The residue at position 7 (Ser-7) is a Phosphoserine. One can recognise a CS domain in the interval 272–360; it reads KVEPLYYWQQ…NEGLMWPELV (89 aa). At Ser-387 the chain carries Phosphoserine.

Its subcellular location is the cytoplasm. The protein resides in the nucleus. In Mus musculus (Mouse), this protein is NudC domain-containing protein 1.